A 103-amino-acid polypeptide reads, in one-letter code: Large ribosomal subunit protein bL21 (103 aa).

Belongs to the bacterial ribosomal protein bL21 family. As to quaternary structure, part of the 50S ribosomal subunit. Contacts protein L20.

Its function is as follows. This protein binds to 23S rRNA in the presence of protein L20. This chain is Large ribosomal subunit protein bL21, found in Nocardia farcinica (strain IFM 10152).